We begin with the raw amino-acid sequence, 72 residues long: Translation initiation factor IF-1 (72 aa).

An S1-like domain is found at 1–72; it reads MSKEDVIEVE…TRGRITWRKK (72 aa).

It belongs to the IF-1 family. Component of the 30S ribosomal translation pre-initiation complex which assembles on the 30S ribosome in the order IF-2 and IF-3, IF-1 and N-formylmethionyl-tRNA(fMet); mRNA recruitment can occur at any time during PIC assembly.

The protein localises to the cytoplasm. Functionally, one of the essential components for the initiation of protein synthesis. Stabilizes the binding of IF-2 and IF-3 on the 30S subunit to which N-formylmethionyl-tRNA(fMet) subsequently binds. Helps modulate mRNA selection, yielding the 30S pre-initiation complex (PIC). Upon addition of the 50S ribosomal subunit IF-1, IF-2 and IF-3 are released leaving the mature 70S translation initiation complex. This Alkaliphilus metalliredigens (strain QYMF) protein is Translation initiation factor IF-1.